Here is a 1134-residue protein sequence, read N- to C-terminus: DENN domain-containing protein 2B (1134 aa).

Residues 1–13 (MTMTANKNSSITH) show a composition bias toward polar residues. Positions 1–90 (MTMTANKNSS…DPSPETSPPI (90 aa)) are disordered. Residues Ser-30 and Ser-32 each carry the phosphoserine modification. Residues 32-43 (SPPPVLYPPRSP) are compositionally biased toward pro residues. Residue Thr-228 is modified to Phosphothreonine. Ser-230 is subject to Phosphoserine. Disordered regions lie at residues 233 to 273 (SYPE…GIRK) and 289 to 571 (LKEQ…KRHS). The segment covering 249–259 (SLYRLEKRPGR) has biased composition (basic and acidic residues). A compositionally biased stretch (low complexity) spans 315–348 (GTLGTLEEPTGTASVSPSSRAGGVAGVAGEAGPP). Phosphothreonine is present on Thr-361. Residue Ser-365 is modified to Phosphoserine. The segment covering 370–385 (LLPPKSSPDPAVNPVP) has biased composition (pro residues). Positions 389 to 399 (RTFEYEADKNP) are enriched in basic and acidic residues. The segment covering 406–428 (GLPPSPTPAAPPPLPSTPAPPVT) has biased composition (pro residues). Positions 429–443 (RRPKKDMRGHRKSQN) are enriched in basic residues. The span at 453–478 (SSLQSLYPSSPTENGTESQPKFGSKS) shows a compositional bias: polar residues. Thr-479 carries the phosphothreonine modification. Composition is skewed to polar residues over residues 511–521 (KSQQLSENSLD) and 542–555 (SLKSNSQSLRSGNW). Position 542 is a phosphoserine (Ser-542). Over residues 559-570 (KSHRLPRLPKRH) the composition is skewed to basic residues. Phosphoserine occurs at positions 571 and 619. Positions 633 to 658 (LSMSSLETASLRDENSESESDSDDRF) are disordered. In terms of domain architecture, uDENN spans 695–843 (EYFVVVSLKK…PFPAPGKTIK (149 aa)). The region spanning 865–998 (RLEHVDFECL…LQAALEQALE (134 aa)) is the cDENN domain. A dDENN domain is found at 1000–1093 (KSELISQDSD…QDRELRKCRA (94 aa)).

Interacts with ITSN1 and GRB2. Isoform 1 interacts with the SH3 domain of ABL1. Post-translationally, phosphorylated. Phosphorylation decreases ITSN1 binding.

It localises to the cytoplasm. Its subcellular location is the cell cortex. It is found in the cell membrane. The protein resides in the recycling endosome. Its function is as follows. May be involved in cytoskeletal organization and tumorogenicity. Seems to be involved in a signaling transduction pathway leading to activation of MAPK1/ERK2. Plays a role in EGFR trafficking from recycling endosomes back to the cell membrane. In terms of biological role, guanine nucleotide exchange factor (GEF) which may activate RAB9A and RAB9B. Promotes the exchange of GDP to GTP, converting inactive GDP-bound Rab proteins into their active GTP-bound form. May block ERK2 activation stimulated by ABL1. May alter cell morphology and cell growth. The polypeptide is DENN domain-containing protein 2B (Dennd2b) (Mus musculus (Mouse)).